A 120-amino-acid chain; its full sequence is Ribonuclease P protein component 2 (120 aa).

Belongs to the eukaryotic/archaeal RNase P protein component 2 family. As to quaternary structure, homodimer in solution. Component of RNase P which consists of a catalytic RNA component and at least 5 protein subunits. Forms a heterotetrameric subcomplex with Rnp3. Reconstituted enzyme missing individual protein subunits is suboptimally active, showing each subunit contributes to optimization of activity.

Its subcellular location is the cytoplasm. It carries out the reaction Endonucleolytic cleavage of RNA, removing 5'-extranucleotides from tRNA precursor.. Functionally, part of ribonuclease P, a protein complex that generates mature tRNA molecules by cleaving their 5'-ends. The polypeptide is Ribonuclease P protein component 2 (Pyrococcus horikoshii (strain ATCC 700860 / DSM 12428 / JCM 9974 / NBRC 100139 / OT-3)).